The primary structure comprises 498 residues: Ribosomal RNA small subunit methyltransferase G 2 (498 aa).

Residues Met-1–Ile-230 are methyltransferase G. 3 residues coordinate S-adenosyl-L-methionine: Gly-89, Met-94, and Arg-154. Residues Arg-231–Ala-498 form a methyltransferase TrmH family region.

The protein in the N-terminal section; belongs to the methyltransferase superfamily. RNA methyltransferase RsmG family. It in the C-terminal section; belongs to the class IV-like SAM-binding methyltransferase superfamily. RNA methyltransferase TrmH family.

Its subcellular location is the cytoplasm. The catalysed reaction is guanosine(527) in 16S rRNA + S-adenosyl-L-methionine = N(7)-methylguanosine(527) in 16S rRNA + S-adenosyl-L-homocysteine. Specifically methylates the N7 position of guanine in position 527 of 16S rRNA. This chain is Ribosomal RNA small subunit methyltransferase G 2 (rsmG2), found in Syntrophobacter fumaroxidans (strain DSM 10017 / MPOB).